Reading from the N-terminus, the 301-residue chain is Probable alpha-L-glutamate ligase (301 aa).

Positions M104–E287 constitute an ATP-grasp domain. Residues K141, E178 to F179, D187, and R211 to N213 each bind ATP. The Mg(2+) site is built by D248, E260, and N262. 3 residues coordinate Mn(2+): D248, E260, and N262.

The protein belongs to the RimK family. Requires Mg(2+) as cofactor. Mn(2+) is required as a cofactor.

This Aliivibrio fischeri (strain MJ11) (Vibrio fischeri) protein is Probable alpha-L-glutamate ligase.